Reading from the N-terminus, the 658-residue chain is Threonine--tRNA ligase (658 aa).

Residues Met1–Thr64 form the TGS domain. Residues Asp246–Pro549 form a catalytic region. Residues Cys343, His394, and His526 each coordinate Zn(2+).

Belongs to the class-II aminoacyl-tRNA synthetase family. In terms of assembly, homodimer. Zn(2+) serves as cofactor.

The protein localises to the cytoplasm. The enzyme catalyses tRNA(Thr) + L-threonine + ATP = L-threonyl-tRNA(Thr) + AMP + diphosphate + H(+). Its function is as follows. Catalyzes the attachment of threonine to tRNA(Thr) in a two-step reaction: L-threonine is first activated by ATP to form Thr-AMP and then transferred to the acceptor end of tRNA(Thr). Also edits incorrectly charged L-seryl-tRNA(Thr). The chain is Threonine--tRNA ligase from Bartonella bacilliformis (strain ATCC 35685 / KC583 / Herrer 020/F12,63).